The following is a 367-amino-acid chain: tRNA-specific 2-thiouridylase MnmA (367 aa).

Residues 9–16 (LMSGGVDS) and Phe-35 each bind ATP. The Nucleophile role is filled by Cys-107. Cys-107 and Cys-205 are disulfide-bonded. Residue Gly-131 coordinates ATP. The interaction with tRNA stretch occupies residues 155–157 (KDQ). Catalysis depends on Cys-205, which acts as the Cysteine persulfide intermediate.

The protein belongs to the MnmA/TRMU family.

It localises to the cytoplasm. The catalysed reaction is S-sulfanyl-L-cysteinyl-[protein] + uridine(34) in tRNA + AH2 + ATP = 2-thiouridine(34) in tRNA + L-cysteinyl-[protein] + A + AMP + diphosphate + H(+). Its function is as follows. Catalyzes the 2-thiolation of uridine at the wobble position (U34) of tRNA, leading to the formation of s(2)U34. The protein is tRNA-specific 2-thiouridylase MnmA of Petrotoga mobilis (strain DSM 10674 / SJ95).